Reading from the N-terminus, the 133-residue chain is Bacteriohemerythrin (133 aa).

Positions 19, 56, 60, 75, 79, 115, and 120 each coordinate Fe cation.

This sequence belongs to the hemerythrin family. As to quaternary structure, monomer.

Oxygen-binding protein. May be involved in a storage mechanism or for delivery to oxygen-requiring enzymes. The oxygen-binding site contains two iron atoms. In Campylobacter jejuni subsp. jejuni serotype O:6 (strain 81116 / NCTC 11828), this protein is Bacteriohemerythrin.